Here is a 308-residue protein sequence, read N- to C-terminus: tRNA dimethylallyltransferase (308 aa).

Position 8-15 (8-15 (GATAVGKT)) interacts with ATP. Residue 10-15 (TAVGKT) coordinates substrate. Residues 33 to 36 (DSRQ) form an interaction with substrate tRNA region.

This sequence belongs to the IPP transferase family. In terms of assembly, monomer. The cofactor is Mg(2+).

It catalyses the reaction adenosine(37) in tRNA + dimethylallyl diphosphate = N(6)-dimethylallyladenosine(37) in tRNA + diphosphate. Functionally, catalyzes the transfer of a dimethylallyl group onto the adenine at position 37 in tRNAs that read codons beginning with uridine, leading to the formation of N6-(dimethylallyl)adenosine (i(6)A). The polypeptide is tRNA dimethylallyltransferase (Kosmotoga olearia (strain ATCC BAA-1733 / DSM 21960 / TBF 19.5.1)).